Consider the following 183-residue polypeptide: GMP synthase [glutamine-hydrolyzing] subunit A (183 aa).

In terms of domain architecture, Glutamine amidotransferase type-1 spans 2-183 (KIYVIYNYGQ…YRNFIEICKK (182 aa)). The Nucleophile role is filled by Cys-74. Catalysis depends on residues His-161 and Glu-163.

Heterodimer composed of a glutamine amidotransferase subunit (A) and a GMP-binding subunit (B).

The catalysed reaction is XMP + L-glutamine + ATP + H2O = GMP + L-glutamate + AMP + diphosphate + 2 H(+). It participates in purine metabolism; GMP biosynthesis; GMP from XMP (L-Gln route): step 1/1. In terms of biological role, catalyzes the synthesis of GMP from XMP. The protein is GMP synthase [glutamine-hydrolyzing] subunit A of Archaeoglobus fulgidus (strain ATCC 49558 / DSM 4304 / JCM 9628 / NBRC 100126 / VC-16).